The primary structure comprises 1420 residues: DNA-directed RNA polymerase subunit beta' (1420 aa).

Positions 71, 73, 86, and 89 each coordinate Zn(2+). Positions 461, 463, and 465 each coordinate Mg(2+). Cysteine 815, cysteine 889, cysteine 896, and cysteine 899 together coordinate Zn(2+).

The protein belongs to the RNA polymerase beta' chain family. The RNAP catalytic core consists of 2 alpha, 1 beta, 1 beta' and 1 omega subunit. When a sigma factor is associated with the core the holoenzyme is formed, which can initiate transcription. Requires Mg(2+) as cofactor. Zn(2+) is required as a cofactor.

It carries out the reaction RNA(n) + a ribonucleoside 5'-triphosphate = RNA(n+1) + diphosphate. In terms of biological role, DNA-dependent RNA polymerase catalyzes the transcription of DNA into RNA using the four ribonucleoside triphosphates as substrates. The sequence is that of DNA-directed RNA polymerase subunit beta' from Histophilus somni (strain 2336) (Haemophilus somnus).